The primary structure comprises 147 residues: Hemoglobin subunit deltaH (147 aa).

Residues 3–147 enclose the Globin domain; sequence RLTDSEKAEV…MANALAHKYH (145 aa). Heme b contacts are provided by histidine 64 and histidine 93.

This sequence belongs to the globin family. In terms of assembly, heterotetramer of two delta chains and two alpha chains. As to expression, red blood cells.

The protein is Hemoglobin subunit deltaH (HBD) of Dendrohyrax dorsalis (Beecroft's tree hyrax).